Consider the following 212-residue polypeptide: Probable nicotinate-nucleotide adenylyltransferase (212 aa).

Belongs to the NadD family.

It carries out the reaction nicotinate beta-D-ribonucleotide + ATP + H(+) = deamido-NAD(+) + diphosphate. The protein operates within cofactor biosynthesis; NAD(+) biosynthesis; deamido-NAD(+) from nicotinate D-ribonucleotide: step 1/1. Its function is as follows. Catalyzes the reversible adenylation of nicotinate mononucleotide (NaMN) to nicotinic acid adenine dinucleotide (NaAD). The protein is Probable nicotinate-nucleotide adenylyltransferase of Mycobacterium avium (strain 104).